Reading from the N-terminus, the 125-residue chain is Membrane protein BRI3 (125 aa).

The next 2 membrane-spanning stretches (helical) occupy residues 67–86 (YPAN…VGVL) and 92–112 (FLGI…CFAL).

Belongs to the BRI3 family. In terms of assembly, interacts with BRI3BP. Interacts with MGAT1 and IFITM3. As to quaternary structure, interacts with BRI3BP, MGAT1 and IFITM3; the interactions are weaker than with isoform 1.

Its subcellular location is the lysosome membrane. The protein resides in the cytoplasm. It localises to the perinuclear region. The protein localises to the nucleus. In terms of biological role, participates in tumor necrosis factor-alpha (TNF)-induced cell death. May be a target of Wnt/beta-catenin signaling in the liver. This is Membrane protein BRI3 (BRI3) from Homo sapiens (Human).